Consider the following 123-residue polypeptide: Small ribosomal subunit protein uS12 (123 aa).

The interval 1-30 (MPTIQQLIRKPRQPKIKRSKSQHMEGCPQK) is disordered. A compositionally biased stretch (basic residues) spans 9-21 (RKPRQPKIKRSKS). Asp89 carries the post-translational modification 3-methylthioaspartic acid. Residues 104–123 (TQGVKDRRQRRSKYGAKRPK) form a disordered region. The segment covering 110–123 (RRQRRSKYGAKRPK) has biased composition (basic residues).

This sequence belongs to the universal ribosomal protein uS12 family. In terms of assembly, part of the 30S ribosomal subunit. Contacts proteins S8 and S17. May interact with IF1 in the 30S initiation complex.

Functionally, with S4 and S5 plays an important role in translational accuracy. Its function is as follows. Interacts with and stabilizes bases of the 16S rRNA that are involved in tRNA selection in the A site and with the mRNA backbone. Located at the interface of the 30S and 50S subunits, it traverses the body of the 30S subunit contacting proteins on the other side and probably holding the rRNA structure together. The combined cluster of proteins S8, S12 and S17 appears to hold together the shoulder and platform of the 30S subunit. The sequence is that of Small ribosomal subunit protein uS12 from Jannaschia sp. (strain CCS1).